The sequence spans 1297 residues: Probable bifunctional E2/E3 enzyme R795 (1297 aa).

An RING-type; atypical zinc finger spans residues 74-128; sequence CAICRYQENEPCIEHKSSESNTKCPIAQSVSCSHSFHACCISRWLHTKKTCPLCN. Positions 678–750 constitute a U-box domain; sequence EPLQEFLCPI…RDWKENNTVI (73 aa). The VWFA domain maps to 899–1082; the sequence is EMTLEIHSSN…LDIMELETMI (184 aa). Residues 1133–1279 form the UBC core domain; sequence QKLIRVQREI…IIDYVNKFAL (147 aa). Catalysis depends on Cys1217, which acts as the Glycyl thioester intermediate.

In the C-terminal section; belongs to the ubiquitin-conjugating enzyme family.

It carries out the reaction S-ubiquitinyl-[E2 ubiquitin-conjugating enzyme]-L-cysteine + [acceptor protein]-L-lysine = [E2 ubiquitin-conjugating enzyme]-L-cysteine + N(6)-ubiquitinyl-[acceptor protein]-L-lysine.. The catalysed reaction is S-ubiquitinyl-[E1 ubiquitin-activating enzyme]-L-cysteine + [E2 ubiquitin-conjugating enzyme]-L-cysteine = [E1 ubiquitin-activating enzyme]-L-cysteine + S-ubiquitinyl-[E2 ubiquitin-conjugating enzyme]-L-cysteine.. The protein operates within protein modification; protein ubiquitination. Its function is as follows. Catalyzes the covalent attachment of ubiquitin to other proteins. Also acts as an E3 ubiquitin-protein ligase. This chain is Probable bifunctional E2/E3 enzyme R795, found in Acanthamoeba polyphaga (Amoeba).